We begin with the raw amino-acid sequence, 209 residues long: MSYCLEIIMKIFTFVGFTKHLDELDFDYVVVDKTFNDMSDDQIKKYQEKIIWIMTNTEIRWLRIAKQLLTIVNFAKNIEDDIIAIIDSDLIIPNLREIIPNERIFTPCYWLYYDWANEIRPFCSGTNYIFRKSLLPYLEYTINTYIENEYYKEIPVDIFIHNFIPHMNILKLGTIHYVKTPIGEIKMEFRYEDIQQIFKHIPEFVLLIG.

This is an uncharacterized protein from Sulfolobus islandicus rod-shaped virus 1 (SIRV-1).